Reading from the N-terminus, the 306-residue chain is Lipid A biosynthesis palmitoleoyltransferase (306 aa).

A helical transmembrane segment spans residues 20 to 40; the sequence is WFGLGVLWLWVQLPYPVLCFL. Residues 132-137 carry the HXXXXD motif motif; that stretch reads HFMSLE.

It belongs to the LpxL/LpxM/LpxP family. LpxP subfamily.

The protein localises to the cell inner membrane. The enzyme catalyses (9Z)-hexadecenoyl-[ACP] + alpha-Kdo-(2-&gt;4)-alpha-Kdo-(2-&gt;6)-lipid IVA (E. coli) = (9Z)-hexadecenoyl-(Kdo)2-lipid IVA (E. coli) + holo-[ACP]. It functions in the pathway bacterial outer membrane biogenesis; lipopolysaccharide biosynthesis. Functionally, catalyzes the transfer of palmitoleate from palmitoleoyl-[acyl-carrier-protein] (ACP) to Kdo(2)-lipid IV(A) to form Kdo(2)-(palmitoleoyl)-lipid IV(A). Required for the biosynthesis of a distinct molecular species of lipid A, which is present only in cells grown at low temperatures. It may confer a selective advantage to cells growing at lower temperatures by making the outer membrane a more effective barrier to harmful chemicals. This Escherichia coli (strain K12) protein is Lipid A biosynthesis palmitoleoyltransferase.